The primary structure comprises 287 residues: Probable glucose uptake protein GlcU (287 aa).

The next 9 helical transmembrane spans lie at 7–29 (LIALLPALFWGSVVLINVFVGGG), 34–56 (IRGTTLGALIVGLGLLITGFAKF), 58–75 (NPTVIIVGLISGALWAFG), 114–136 (WSSMTQIIFGLIAMILLVTGVAL), 156–178 (MGILIVSTVGYVGFVVLGDIFGV), 183–202 (ALFFQSVGMAIGGFILSMNH), 209–228 (TALNLLPGVIWGIGNLFMFY), 233–255 (VGVATSFSLSQLLVIVSTLGGIF), and 267–286 (TGIWVGIIIIVIAAIILGNL).

This sequence belongs to the GRP transporter (TC 2.A.7.5) family.

The protein localises to the cell membrane. Functionally, involved in the uptake of glucose. This is Probable glucose uptake protein GlcU (glcU) from Staphylococcus aureus (strain MRSA252).